A 212-amino-acid polypeptide reads, in one-letter code: Inactive ribonuclease-like protein 10 (212 aa).

Positions 1–24 (MKLTLVQIFFMMLLLLLGLGVGLG) are cleaved as a signal peptide.

This sequence belongs to the pancreatic ribonuclease family. In terms of processing, the N-terminus is blocked. Glycosylated. In terms of tissue distribution, male-specific expression in proximal caput of the epididymis.

It is found in the secreted. In terms of biological role, secreted proximal epididymal protein required for post-testicular sperm maturation and male fertility. May be involved in sperm adhesion to the egg zona pellucida. Does not have ribonuclease activity. The polypeptide is Inactive ribonuclease-like protein 10 (RNASE10) (Ovis aries (Sheep)).